The chain runs to 114 residues: Thioredoxin H1 (114 aa).

Ala-2 is subject to N-acetylalanine. Residues 2-114 (ASEEGQVIAC…LQSTIAKHLA (113 aa)) enclose the Thioredoxin domain. Catalysis depends on nucleophile residues Cys-40 and Cys-43. Cysteines 40 and 43 form a disulfide.

This sequence belongs to the thioredoxin family. Plant H-type subfamily. As to quaternary structure, interacts with FBA6. Interacts with MDH1.

The protein resides in the cytoplasm. In terms of biological role, thiol-disulfide oxidoreductase involved in the redox regulation of a number of cytosolic enzymes. Activates the cytosolic malate dehydrogenase (MDH) probably by reducing an interchain disulfide bond of the inactive MDH homodimer. Possesses insulin disulfide bonds reducing activity. The protein is Thioredoxin H1 (TRX1) of Arabidopsis thaliana (Mouse-ear cress).